A 40-amino-acid chain; its full sequence is Protein P4 (40 aa).

A helical membrane pass occupies residues 10–29 (KYFAYGVAISAAGAILAEYV).

Its subcellular location is the virion membrane. May interact with the viral DNA. This chain is Protein P4 (IV), found in Pseudoalteromonas phage PM2 (Bacteriophage PM2).